Reading from the N-terminus, the 127-residue chain is Fluoride-specific ion channel FluC (127 aa).

Helical transmembrane passes span Phe-4 to Val-24, Tyr-38 to Phe-58, Val-71 to Val-91, and Leu-104 to Leu-124. 2 residues coordinate Na(+): Gly-78 and Thr-81.

This sequence belongs to the fluoride channel Fluc/FEX (TC 1.A.43) family.

The protein resides in the cell inner membrane. The enzyme catalyses fluoride(in) = fluoride(out). With respect to regulation, na(+) is not transported, but it plays an essential structural role and its presence is essential for fluoride channel function. In terms of biological role, fluoride-specific ion channel. Important for reducing fluoride concentration in the cell, thus reducing its toxicity. The protein is Fluoride-specific ion channel FluC of Vibrio parahaemolyticus serotype O3:K6 (strain RIMD 2210633).